A 70-amino-acid chain; its full sequence is Large ribosomal subunit protein uL29 (70 aa).

This sequence belongs to the universal ribosomal protein uL29 family.

This Thermosynechococcus vestitus (strain NIES-2133 / IAM M-273 / BP-1) protein is Large ribosomal subunit protein uL29.